Consider the following 191-residue polypeptide: Flavin reductase (NADH) (191 aa).

46 to 52 (YGLTCSA) is an FAD binding site. Position 55 (S55) interacts with NAD(+). 72-73 (RV) provides a ligand contact to FAD. Residues H144 and 166 to 169 (YWRR) each bind NAD(+).

The protein belongs to the non-flavoprotein flavin reductase family.

The enzyme catalyses a reduced flavin + NAD(+) = an oxidized flavin + NADH + 2 H(+). Its function is as follows. Catalyzes the reduction of flavin by NADH. Subsequently, the reduced flavins is transferred to the tetracycline 7-halogenase CtcP. The polypeptide is Flavin reductase (NADH) (Kitasatospora aureofaciens (Streptomyces aureofaciens)).